The chain runs to 131 residues: Phosphoribosyl-AMP cyclohydrolase (131 aa).

Asp-89 contributes to the Mg(2+) binding site. Residue Cys-90 participates in Zn(2+) binding. The Mg(2+) site is built by Asp-91 and Asp-93. Zn(2+)-binding residues include Cys-106 and Cys-113.

It belongs to the PRA-CH family. Homodimer. The cofactor is Mg(2+). Requires Zn(2+) as cofactor.

Its subcellular location is the cytoplasm. The catalysed reaction is 1-(5-phospho-beta-D-ribosyl)-5'-AMP + H2O = 1-(5-phospho-beta-D-ribosyl)-5-[(5-phospho-beta-D-ribosylamino)methylideneamino]imidazole-4-carboxamide. Its pathway is amino-acid biosynthesis; L-histidine biosynthesis; L-histidine from 5-phospho-alpha-D-ribose 1-diphosphate: step 3/9. Its function is as follows. Catalyzes the hydrolysis of the adenine ring of phosphoribosyl-AMP. This is Phosphoribosyl-AMP cyclohydrolase from Bifidobacterium longum (strain DJO10A).